Reading from the N-terminus, the 329-residue chain is ATPase ASNA1 homolog 1 (329 aa).

26-33 (KGGVGKTT) is a binding site for ATP. The active site involves Asp55. Positions 235 and 262 each coordinate ATP. The Zn(2+) site is built by Cys271 and Cys274.

Belongs to the arsA ATPase family. As to quaternary structure, homodimer.

The protein resides in the cytoplasm. It is found in the endoplasmic reticulum. In terms of biological role, ATPase required for the post-translational delivery of tail-anchored (TA) proteins to the endoplasmic reticulum. Recognizes and selectively binds the transmembrane domain of TA proteins in the cytosol. This complex then targets to the endoplasmic reticulum by membrane-bound receptors, where the tail-anchored protein is released for insertion. This process is regulated by ATP binding and hydrolysis. ATP binding drives the homodimer towards the closed dimer state, facilitating recognition of newly synthesized TA membrane proteins. ATP hydrolysis is required for insertion. Subsequently, the homodimer reverts towards the open dimer state, lowering its affinity for the membrane-bound receptor, and returning it to the cytosol to initiate a new round of targeting. This Paramecium tetraurelia protein is ATPase ASNA1 homolog 1.